A 631-amino-acid chain; its full sequence is Shootin-1 (631 aa).

An N-acetylmethionine modification is found at M1. Residues S3 and S4 each carry the phosphoserine modification. The stretch at 7-353 (EKQLQLITSL…RVNQSENSVP (347 aa)) forms a coiled coil. Position 101 is a phosphoserine; by PAK1 (S101). Phosphoserine is present on S249. 2 disordered regions span residues 343–404 (KRVN…EVTD) and 417–508 (IKKG…KSMP). Pro residues predominate over residues 352 to 369 (VPPPPPPPPPLPPPPPNP). S375 bears the Phosphoserine mark. Residues 456-465 (LNKSTSSRSL) show a composition bias toward polar residues. At S473 the chain carries Phosphoserine. A Phosphothreonine modification is found at T487. Residues 490–505 (ADSSSPTGILATSESK) are compositionally biased toward polar residues. A Phosphoserine modification is found at S494. T496 is modified (phosphothreonine). S506 and S515 each carry phosphoserine. The tract at residues 530-631 (FNNPCPLTPE…KTGETDSSNC (102 aa)) is disordered. T537 bears the Phosphothreonine mark. A compositionally biased stretch (basic and acidic residues) spans 590 to 602 (PQTKDQAAEKDPT).

It belongs to the shootin family. As to quaternary structure, interacts with L1CAM; this interaction occurs at axonal growth cones. Interacts with actin filament retrograde flow; this interaction is enhanced in a netrin-1- and PAK1-dependent manner and promotes F-actin-substrate coupling and concomitant formation of traction forces at axonal growth cones. Interacts with RUFY3. Interacts with PFN2. Interacts (via N-terminus) with KIF20B; this interaction is direct and promotes the association of SHTN1 to microtubules in primary neurons. Associates with microtubule. In terms of processing, phosphorylated on Ser-101 and Ser-249 by PAK1 through a CDC42- and RAC1-dependent signaling pathway, which enhances its association with F-actin retrograde flow in filopodia and lamellipodia of axonal growth cones. Phosphorylation on Ser-101 and Ser-249 is increased by netrin-1. In terms of tissue distribution, expressed in hippocampal neurons.

Its subcellular location is the perikaryon. It is found in the cell projection. The protein resides in the axon. It localises to the growth cone. The protein localises to the cytoplasm. Its subcellular location is the cytoskeleton. It is found in the filopodium. The protein resides in the lamellipodium. Its function is as follows. Involved in the generation of internal asymmetric signals required for neuronal polarization and neurite outgrowth. Mediates netrin-1-induced F-actin-substrate coupling or 'clutch engagement' within the axon growth cone through activation of CDC42, RAC1 and PAK1-dependent signaling pathway, thereby converting the F-actin retrograde flow into traction forces, concomitantly with filopodium extension and axon outgrowth. Plays a role in cytoskeletal organization by regulating the subcellular localization of phosphoinositide 3-kinase (PI3K) activity at the axonal growth cone. Also plays a role in regenerative neurite outgrowth. In the developing cortex, cooperates with KIF20B to promote both the transition from the multipolar to the bipolar stage and the radial migration of cortical neurons from the ventricular zone toward the superficial layer of the neocortex. Involved in the accumulation of phosphatidylinositol 3,4,5-trisphosphate (PIP3) in the growth cone of primary hippocampal neurons. The protein is Shootin-1 of Mus musculus (Mouse).